Consider the following 488-residue polypeptide: MTKNNEAGWNLDHSYTTLPQSFYTEIPPTPVSSPELVKLNHSLAISLGFNPEELKKEAEIAIFAGNALPEGAHPLAQAYAGHQFGHFNMLGDGRALLIGEQITPSGKRFDIQLKGSGPTPYSRRGDGRAALGPMLREYIISEAMYALDIPTTRSLAVVTTGEPTYRETKLPGAILTRVASSHIRVGTFQYAAARGSIEDLQSLADYTIKRHYPEIEAHENRYTALLQEVIKKQASLIAKWQLVGFIHGVMNTDNITISGETIDYGPCAFMDNYDQGTVFSSIDTQGRYAYGNQPYMAAWDLARLAESLIPILHEDEEEALKIAQDEISKFSVQYENNWFLGMKKKLGLFSKEEQDHSLIEQLLKMMEKYKADYTNTFRSLTLNTIENTALFESPEFKEWYKLWQSRLEKQEESKENAYEMMKNNNPSIIPRNHRVEEALEAAVTNGDYSVMEKLLEALANPYAYSTDQEEYCVLPTPTNRPYRTFCGT.

Glycine 91, glycine 93, arginine 94, lysine 114, aspartate 126, glycine 127, arginine 177, and arginine 184 together coordinate ATP. Aspartate 253 functions as the Proton acceptor in the catalytic mechanism. 2 residues coordinate Mg(2+): asparagine 254 and aspartate 263. Aspartate 263 lines the ATP pocket.

This sequence belongs to the SELO family. Requires Mg(2+) as cofactor. It depends on Mn(2+) as a cofactor.

The enzyme catalyses L-seryl-[protein] + ATP = 3-O-(5'-adenylyl)-L-seryl-[protein] + diphosphate. The catalysed reaction is L-threonyl-[protein] + ATP = 3-O-(5'-adenylyl)-L-threonyl-[protein] + diphosphate. It carries out the reaction L-tyrosyl-[protein] + ATP = O-(5'-adenylyl)-L-tyrosyl-[protein] + diphosphate. It catalyses the reaction L-histidyl-[protein] + UTP = N(tele)-(5'-uridylyl)-L-histidyl-[protein] + diphosphate. The enzyme catalyses L-seryl-[protein] + UTP = O-(5'-uridylyl)-L-seryl-[protein] + diphosphate. The catalysed reaction is L-tyrosyl-[protein] + UTP = O-(5'-uridylyl)-L-tyrosyl-[protein] + diphosphate. In terms of biological role, nucleotidyltransferase involved in the post-translational modification of proteins. It can catalyze the addition of adenosine monophosphate (AMP) or uridine monophosphate (UMP) to a protein, resulting in modifications known as AMPylation and UMPylation. The sequence is that of Protein nucleotidyltransferase YdiU from Bacillus thuringiensis subsp. konkukian (strain 97-27).